Here is a 65-residue protein sequence, read N- to C-terminus: uncharacterized protein (65 aa).

The N-terminal stretch at methionine 1–alanine 22 is a signal peptide.

This is an uncharacterized protein from Invertebrate iridescent virus 6 (IIV-6).